A 926-amino-acid polypeptide reads, in one-letter code: Tyrosine-protein phosphatase non-receptor type 4 (926 aa).

The FERM domain maps to 29–312 (VVCNILLLDN…EHHTFFRLDR (284 aa)). Disordered stretches follow at residues 379-412 (SDDRLETQSLPSRSPPGTPNHRNSSFTQEATRVR), 429-474 (SEDF…KKNS), and 492-511 (NESFDVPSSPEKSTPNGGIP). Composition is skewed to polar residues over residues 398–408 (NHRNSSFTQEA) and 432–455 (FVSQRSPSSTQANSIVLESSPSQE). Serine 474 bears the Phosphoserine mark. The 73-residue stretch at 517–589 (LIKMKPDENG…DQVVLFIKAS (73 aa)) folds into the PDZ domain. The 257-residue stretch at 655-911 (VLAQFDQLYR…RFVCEAILKV (257 aa)) folds into the Tyrosine-protein phosphatase domain. Substrate-binding positions include aspartate 820, 852–858 (CSAGIGR), and glutamine 896. Residue cysteine 852 is the Phosphocysteine intermediate of the active site.

The protein belongs to the protein-tyrosine phosphatase family. Non-receptor class subfamily. Highly expressed in testis. Specifically expressed in spermatocytes and spermatids within seminiferous tubules (at protein level).

The protein localises to the cell membrane. Its subcellular location is the cytoplasm. The protein resides in the cytoskeleton. It carries out the reaction O-phospho-L-tyrosyl-[protein] + H2O = L-tyrosyl-[protein] + phosphate. Phosphatase that plays a role in immunity, learning, synaptic plasticity or cell homeostasis. Regulates neuronal cell homeostasis by protecting neurons against apoptosis. Negatively regulates TLR4-induced interferon beta production by dephosphorylating adapter TICAM2 and inhibiting subsequent TRAM-TRIF interaction. Dephosphorylates also the immunoreceptor tyrosine-based activation motifs/ITAMs of the TCR zeta subunit and thereby negatively regulates TCR-mediated signaling pathway. May act at junctions between the membrane and the cytoskeleton. This chain is Tyrosine-protein phosphatase non-receptor type 4 (Ptpn4), found in Mus musculus (Mouse).